The following is a 215-amino-acid chain: Adenylate kinase (215 aa).

10 to 15 (GAGKGT) contacts ATP. The NMP stretch occupies residues 30 to 59 (STGDMLRAAVKAGTELGLIAKSVMDSGGLV). AMP is bound by residues Thr-31, Arg-36, 57–59 (GLV), 85–88 (GFPR), and Gln-92. The LID stretch occupies residues 122–159 (GRRVHEASGRVYHTVYNPPKVEGKDDVTGDDLVQRKDD). Residues Arg-123 and 132 to 133 (VY) contribute to the ATP site. AMP contacts are provided by Arg-156 and Arg-167. Gly-201 serves as a coordination point for ATP.

It belongs to the adenylate kinase family. Monomer.

It localises to the cytoplasm. The catalysed reaction is AMP + ATP = 2 ADP. The protein operates within purine metabolism; AMP biosynthesis via salvage pathway; AMP from ADP: step 1/1. Its function is as follows. Catalyzes the reversible transfer of the terminal phosphate group between ATP and AMP. Plays an important role in cellular energy homeostasis and in adenine nucleotide metabolism. This is Adenylate kinase from Pseudomonas fluorescens (strain SBW25).